The sequence spans 149 residues: Large ribosomal subunit protein bL9 (149 aa).

It belongs to the bacterial ribosomal protein bL9 family.

Functionally, binds to the 23S rRNA. The protein is Large ribosomal subunit protein bL9 of Helicobacter pylori (strain G27).